The following is a 368-amino-acid chain: ATP-dependent (S)-NAD(P)H-hydrate dehydratase (368 aa).

Residues 13–357 (LFKKVRKIVP…DEVHESFLEL (345 aa)) form the YjeF C-terminal domain. Residues G125 and 178–184 (NVNEFSR) each bind (6S)-NADPHX. ATP is bound by residues 231-235 (KGPHD) and 250-259 (GGLKRSGGQG). Position 260 (D260) interacts with (6S)-NADPHX.

Belongs to the NnrD/CARKD family. It depends on Mg(2+) as a cofactor.

It localises to the cytoplasm. It carries out the reaction (6S)-NADHX + ATP = ADP + phosphate + NADH + H(+). It catalyses the reaction (6S)-NADPHX + ATP = ADP + phosphate + NADPH + H(+). In terms of biological role, catalyzes the dehydration of the S-form of NAD(P)HX at the expense of ATP, which is converted to ADP. Together with NAD(P)HX epimerase, which catalyzes the epimerization of the S- and R-forms, the enzyme allows the repair of both epimers of NAD(P)HX, a damaged form of NAD(P)H that is a result of enzymatic or heat-dependent hydration. The sequence is that of ATP-dependent (S)-NAD(P)H-hydrate dehydratase from Aspergillus fumigatus (strain ATCC MYA-4609 / CBS 101355 / FGSC A1100 / Af293) (Neosartorya fumigata).